A 479-amino-acid polypeptide reads, in one-letter code: MSDLRFLDLVKPFAPFLPEIAAPERKVPFKQKMLWTGVTLLIFLVMSQVPLYGIVSSDSSDPLLWLRMILAANRGTLMELGISPIVTSSMLVQLLVGSQLIEVNMELKSDREMYQLVQKFLAIIIAFGQATAYVLTGMYGRPQDLGAGICLLLILQLAAASLIVLLLDELLQKGYGLGSGISLFIATINCENIFWKAFSPTTYHIANGVQFEGAVINFVYVMFTWDNKAAALYQAFFRSGLTSSQIQLPNLWNFFATLLVFGVVIYLQDFRVEIPIRSQKFRGYRSTFPVKLLYTSNTPIMLQSALTSNLFFASRLLFNRFSSNFLVRFLGVWEQTATSGLSYYLSPPASFQDALIDPIHTLVYVFFTMFACALFSKLWIEVSGASPRDVAKQLKSQQLVMAGHREGSMYKELKRIIPTAAWLSGAVVGALAVASDLLGALGSGTAVLLCTTTIYGYYEQLQKEIKGDQYGLPVTPMMQ.

Over 1–34 (MSDLRFLDLVKPFAPFLPEIAAPERKVPFKQKML) the chain is Cytoplasmic. Residues 35 to 55 (WTGVTLLIFLVMSQVPLYGIV) form a helical membrane-spanning segment. The Lumenal portion of the chain corresponds to 56–76 (SSDSSDPLLWLRMILAANRGT). The helical transmembrane segment at 77–97 (LMELGISPIVTSSMLVQLLVG) threads the bilayer. The Cytoplasmic segment spans residues 98-119 (SQLIEVNMELKSDREMYQLVQK). A helical membrane pass occupies residues 120–140 (FLAIIIAFGQATAYVLTGMYG). At 141-146 (RPQDLG) the chain is on the lumenal side. A helical membrane pass occupies residues 147-167 (AGICLLLILQLAAASLIVLLL). Residues 168 to 245 (DELLQKGYGL…FFRSGLTSSQ (78 aa)) are Cytoplasmic-facing. The helical transmembrane segment at 246 to 266 (IQLPNLWNFFATLLVFGVVIY) threads the bilayer. Over 267-354 (LQDFRVEIPI…LSPPASFQDA (88 aa)) the chain is Lumenal. Residues 355-375 (LIDPIHTLVYVFFTMFACALF) form a helical membrane-spanning segment. The Cytoplasmic segment spans residues 376–415 (SKLWIEVSGASPRDVAKQLKSQQLVMAGHREGSMYKELKR). Residues 416–434 (IIPTAAWLSGAVVGALAVA) traverse the membrane as a helical segment. The Lumenal portion of the chain corresponds to 435–440 (SDLLGA). A helical membrane pass occupies residues 441-458 (LGSGTAVLLCTTTIYGYY). Residues 459–479 (EQLQKEIKGDQYGLPVTPMMQ) are Cytoplasmic-facing.

Belongs to the SecY/SEC61-alpha family. Heterotrimeric complex composed of SEC61-alpha, SEC61-beta and SEC61-gamma.

The protein resides in the endoplasmic reticulum membrane. Appears to play a crucial role in the insertion of secretory and membrane polypeptides into the ER. It is required for assembly of membrane and secretory proteins and is essential for cell growth. It interacts with other membrane proteins required for protein translocation. Upon binding to sec62/63 complex, secretory precursor polypeptides may engage sec61 to begin membrane penetration event. A cycle of assembly and disassembly of sec62/63 from sec61 may govern the activity of the translocase. The protein is Protein transport protein sec61 subunit alpha (sec61) of Schizosaccharomyces pombe (strain 972 / ATCC 24843) (Fission yeast).